We begin with the raw amino-acid sequence, 353 residues long: Phosphate acyltransferase (353 aa).

This sequence belongs to the PlsX family. As to quaternary structure, homodimer. Probably interacts with PlsY.

It is found in the cytoplasm. The enzyme catalyses a fatty acyl-[ACP] + phosphate = an acyl phosphate + holo-[ACP]. It functions in the pathway lipid metabolism; phospholipid metabolism. In terms of biological role, catalyzes the reversible formation of acyl-phosphate (acyl-PO(4)) from acyl-[acyl-carrier-protein] (acyl-ACP). This enzyme utilizes acyl-ACP as fatty acyl donor, but not acyl-CoA. The polypeptide is Phosphate acyltransferase (Syntrophobacter fumaroxidans (strain DSM 10017 / MPOB)).